The sequence spans 265 residues: Dehydrogenase RED2 (265 aa).

Residues 6 to 26 (SFLLSKLFLCIALCTAYVAFS) traverse the membrane as a helical segment. A glycan (N-linked (GlcNAc...) asparagine) is linked at Asn45. The chain crosses the membrane as a helical span at residues 47–67 (TSTVFGLTIVAIGLSALSSWL). A glycan (N-linked (GlcNAc...) asparagine) is linked at Asn74. Val89 lines the NADP(+) pocket. Asn127 is a glycosylation site (N-linked (GlcNAc...) asparagine). NADP(+) contacts are provided by Asp136 and Asn163. Asn176 is a glycosylation site (N-linked (GlcNAc...) asparagine). Ser216 acts as the Proton donor in catalysis. Tyr228 and Lys232 together coordinate NADP(+). The active-site Proton acceptor is the Tyr228. Residue Lys232 is the Lowers pKa of active site Tyr of the active site.

The protein belongs to the short-chain dehydrogenases/reductases (SDR) family.

The protein localises to the membrane. It catalyses the reaction a primary alcohol + NAD(+) = an aldehyde + NADH + H(+). The enzyme catalyses a secondary alcohol + NAD(+) = a ketone + NADH + H(+). It functions in the pathway mycotoxin biosynthesis. Its function is as follows. Dehydrogenase; part of the Tox1B locus, one of the 2 loci that mediate the biosynthesis of T-toxin, a family of linear polyketides 37 to 45 carbons in length, of which the major component is 41 carbons, and which leads to high virulence to maize. One of the PKSs (PKS1 or PKS2) could synthesize a precursor, used subsequently by the other PKS as starter unit, to add additional carbons. Variability in the length of the final carbon backbone C35-47 could be achieved by varying the number of condensation cycles, or use of different starter or extender units or might be due to decarboxylation of the penultimate product, catalyzed by DEC1. Additional proteins are required for the biosynthesis of T-toxin, including oxidoreductases RED1, RED2, RED3, LAM1 and OXI1, as well as esterase TOX9. The polypeptide is Dehydrogenase RED2 (Cochliobolus heterostrophus (strain C4 / ATCC 48331 / race T) (Southern corn leaf blight fungus)).